Here is a 29-residue protein sequence, read N- to C-terminus: U1-pseudomyrmecitoxin-Pt1 subunit SS2 (29 aa).

The protein belongs to the myrmexin family. Heterodimer composed of subunit SS2 and subunit LS1 (U1-PSDTX-Pt1e), and heterodimer composed of subunit SS2 and LS2 (U1-PSDTX-Pt1c); disulfide-linked. As to expression, expressed by the venom gland.

Its subcellular location is the secreted. In terms of biological role, this heterodimer may have anti-inflammatory properties, since the myrmexin complex (composed of 6 SS-LS heterodimers) inhibits carrageenin-induced edema in a dose-dependent manner (after subcutaneous injection into rats). The protein is U1-pseudomyrmecitoxin-Pt1 subunit SS2 of Pseudomyrmex triplarinus (Ant).